Here is a 318-residue protein sequence, read N- to C-terminus: MFPSPALTPTPFSVKDILNLEQQQRSLASGDLSARLEATLAPASCMLAAFKPEAYSGPEAAASGLAELRAEMGPAPSPPKCSPAFPAAPTFYPGAYGDPDPAKDPRADKKELCALQKAVELDKAETDGAERPRARRRRKPRVLFSQAQVYELERRFKQQRYLSAPERDQLASVLKLTSTQVKIWFQNRRYKCKRQRQDQTLELLGPPPPPARRIAVPVLVRDGKPCLGDPAAYAPAYGVGLNAYGYNAYPYPSYGGAACSPGYSCAAYPAAPPAAQPPAASANSNFVNFGVGDLNTVQSPGMPQGNSGVSTLHGIRAW.

The homeobox DNA-binding region spans 137–196 (RRKPRVLFSQAQVYELERRFKQQRYLSAPERDQLASVLKLTSTQVKIWFQNRRYKCKRQR).

This sequence belongs to the NK-2 homeobox family. In terms of assembly, homodimer (via the homeobox); binds DNA as homodimer. Interacts (via the homeobox) with TBX5 (via the T-box); this complex binds DNA. Interacts with HIPK1 and HIPK2, but not HIPK3. Interacts with the C-terminal zinc finger of GATA4 through its homeobox domain. Also interacts with JARID2 which represses its ability to activate transcription of ANF. Interacts with FBLIM1. Interacts with TBX18. Interacts with histone methyltransferase NSD2 (via HMG box). Interacts with NEDD9. Interacts with TBX1. As to expression, predominantly in the adult and embryonic heart, and to a lesser extent in lingual muscle, spleen and stomach.

Its subcellular location is the nucleus. In terms of biological role, transcription factor required for the development of the heart and the spleen. During heart development, acts as a transcriptional activator of NPPA/ANF in cooperation with GATA4. May cooperate with TBX2 to negatively modulate expression of NPPA/ANF in the atrioventricular canal. Binds to the core DNA motif of NPPA promoter. Together with PBX1, required for spleen development through a mechanism that involves CDKN2B repression. Positively regulates transcription of genes such as COL3A1 and MMP2, resulting in increased pulmonary endothelial fibrosis in response to hypoxia. The protein is Homeobox protein Nkx-2.5 (Nkx2-5) of Mus musculus (Mouse).